Reading from the N-terminus, the 268-residue chain is Ribosomal RNA small subunit methyltransferase A (268 aa).

Residues Asn-18, Leu-20, Gly-45, Glu-66, Asp-91, and Asn-112 each contribute to the S-adenosyl-L-methionine site.

Belongs to the class I-like SAM-binding methyltransferase superfamily. rRNA adenine N(6)-methyltransferase family. RsmA subfamily.

It localises to the cytoplasm. The enzyme catalyses adenosine(1518)/adenosine(1519) in 16S rRNA + 4 S-adenosyl-L-methionine = N(6)-dimethyladenosine(1518)/N(6)-dimethyladenosine(1519) in 16S rRNA + 4 S-adenosyl-L-homocysteine + 4 H(+). Specifically dimethylates two adjacent adenosines (A1518 and A1519) in the loop of a conserved hairpin near the 3'-end of 16S rRNA in the 30S particle. May play a critical role in biogenesis of 30S subunits. In Shewanella frigidimarina (strain NCIMB 400), this protein is Ribosomal RNA small subunit methyltransferase A.